The following is a 322-amino-acid chain: Glucokinase (322 aa).

An ATP-binding site is contributed by 10–15 (GDIGGT).

Belongs to the bacterial glucokinase family.

Its subcellular location is the cytoplasm. It catalyses the reaction D-glucose + ATP = D-glucose 6-phosphate + ADP + H(+). The protein is Glucokinase of Hahella chejuensis (strain KCTC 2396).